The chain runs to 451 residues: Bacteriochlorophyllide d C-8(2)-methyltransferase (451 aa).

The B12-binding domain occupies 1-118; sequence MDDDSNQKPL…DDVANNRLKE (118 aa). The 230-residue stretch at 148–377 folds into the Radical SAM core domain; the sequence is VDGTKSIPIY…ALHLVIKSDR (230 aa). Residues C162, C166, and C169 each coordinate [4Fe-4S] cluster.

Belongs to the radical SAM superfamily. It depends on [4Fe-4S] cluster as a cofactor.

It localises to the cytoplasm. The catalysed reaction is 8,12-diethyl-3-vinylbacteriochlorophyllide d + S-adenosyl-L-methionine = 12-ethyl-8-propyl-3-vinylbacteriochlorophyllide d + S-adenosyl-L-homocysteine + H(+). The enzyme catalyses 12-ethyl-8-propyl-3-vinylbacteriochlorophyllide d + S-adenosyl-L-methionine = 12-ethyl-8-isobutyl-3-vinylbacteriochlorophyllide d + S-adenosyl-L-homocysteine + H(+). The protein operates within porphyrin-containing compound metabolism; bacteriochlorophyll biosynthesis (light-independent). Involved in the biosynthesis of the major light-harvesting pigment bacteriochlorophyll c (BChlc), which confers a significant competitive advantage to green sulfur bacteria living at limiting red and near-infrared light intensities. BchQ is a methyltransferase that adds two consecutive methyl groups to the ethyl carbon at the C-8(2) position of 8,12-diethyl-3-vinylbacteriochlorophyllide d to yield 12-ethyl-8-isobutyl-3-vinylbacteriochlorophyllide d. This Chlorobaculum tepidum (strain ATCC 49652 / DSM 12025 / NBRC 103806 / TLS) (Chlorobium tepidum) protein is Bacteriochlorophyllide d C-8(2)-methyltransferase.